The chain runs to 676 residues: RNA helicase NPH-II (676 aa).

The 176-residue stretch at 172-347 folds into the Helicase ATP-binding domain; it reads FLAWISHRPV…IFLPNPAFIH (176 aa). 185-192 lines the ATP pocket; that stretch reads GGTGVGKT. The DEXH box signature appears at 296–299; the sequence is DEVH. In terms of domain architecture, Helicase C-terminal spans 366-535; sequence NPSSRMAYIE…NYILYANKFN (170 aa).

It belongs to the DEAD box helicase family. DEAH subfamily. Monomer.

It localises to the virion. It carries out the reaction ATP + H2O = ADP + phosphate + H(+). Functionally, NTP-dependent helicase that catalyzes unidirectional unwinding of 3'tailed duplex RNAs and plays an important role during transcription of early mRNAs, presumably by preventing R-loop formation behind the elongating RNA polymerase. Might also play a role in the export of newly synthesized mRNA chains out of the core into the cytoplasm. Required for replication and propagation of viral particles. In Monkeypox virus, this protein is RNA helicase NPH-II (OPG084).